A 307-amino-acid chain; its full sequence is Transcription factor MYB78 (307 aa).

HTH myb-type domains follow at residues Glu23–Val79 and Arg80–Ala130. DNA-binding regions (H-T-H motif) lie at residues Trp51–Leu75 and Trp103–Val126.

It localises to the nucleus. This Arabidopsis thaliana (Mouse-ear cress) protein is Transcription factor MYB78.